Reading from the N-terminus, the 58-residue chain is MKILSVLLIALIICSINICSEAGLIDVRCYASRECWEPCRRVTGSAQAKCQNNQCRCY.

An N-terminal signal peptide occupies residues 1 to 22 (MKILSVLLIALIICSINICSEA). 3 disulfides stabilise this stretch: C29/C50, C35/C55, and C39/C57.

It belongs to the short scorpion toxin superfamily. Potassium channel inhibitor family. Alpha-KTx 16 subfamily. As to expression, expressed by the venom gland.

It localises to the secreted. Inhibits potassium channel. The chain is Potassium channel toxin alpha-KTx 16.6 from Buthus israelis (Israeli scorpion).